We begin with the raw amino-acid sequence, 389 residues long: S-adenosylmethionine synthase (389 aa).

Residue H15 participates in ATP binding. D17 lines the Mg(2+) pocket. A K(+)-binding site is contributed by E43. L-methionine is bound by residues E56 and Q99. The segment at 99-109 (QSPDIAQGVNE) is flexible loop. Residues 166–168 (DAK), 234–235 (RF), D243, 249–250 (RK), A266, and K270 contribute to the ATP site. L-methionine is bound at residue D243. K274 provides a ligand contact to L-methionine.

The protein belongs to the AdoMet synthase family. In terms of assembly, homotetramer; dimer of dimers. It depends on Mg(2+) as a cofactor. K(+) is required as a cofactor.

The protein resides in the cytoplasm. The enzyme catalyses L-methionine + ATP + H2O = S-adenosyl-L-methionine + phosphate + diphosphate. It functions in the pathway amino-acid biosynthesis; S-adenosyl-L-methionine biosynthesis; S-adenosyl-L-methionine from L-methionine: step 1/1. Functionally, catalyzes the formation of S-adenosylmethionine (AdoMet) from methionine and ATP. The overall synthetic reaction is composed of two sequential steps, AdoMet formation and the subsequent tripolyphosphate hydrolysis which occurs prior to release of AdoMet from the enzyme. This chain is S-adenosylmethionine synthase, found in Neisseria meningitidis serogroup C (strain 053442).